We begin with the raw amino-acid sequence, 61 residues long: Small ribosomal subunit protein uS14 (61 aa).

Zn(2+)-binding residues include Cys-24, Cys-27, Cys-40, and Cys-43.

Belongs to the universal ribosomal protein uS14 family. Zinc-binding uS14 subfamily. As to quaternary structure, part of the 30S ribosomal subunit. Contacts proteins S3 and S10. The cofactor is Zn(2+).

In terms of biological role, binds 16S rRNA, required for the assembly of 30S particles and may also be responsible for determining the conformation of the 16S rRNA at the A site. This chain is Small ribosomal subunit protein uS14, found in Halothermothrix orenii (strain H 168 / OCM 544 / DSM 9562).